The primary structure comprises 631 residues: Phosphomethylpyrimidine synthase (631 aa).

Substrate contacts are provided by residues Asn-239, Met-268, Tyr-297, His-333, 353 to 355, 394 to 397, and Glu-433; these read SRG and DGLR. His-437 serves as a coordination point for Zn(2+). Tyr-460 contacts substrate. His-501 is a binding site for Zn(2+). The [4Fe-4S] cluster site is built by Cys-581, Cys-584, and Cys-589.

Belongs to the ThiC family. In terms of assembly, homodimer. It depends on [4Fe-4S] cluster as a cofactor.

The enzyme catalyses 5-amino-1-(5-phospho-beta-D-ribosyl)imidazole + S-adenosyl-L-methionine = 4-amino-2-methyl-5-(phosphooxymethyl)pyrimidine + CO + 5'-deoxyadenosine + formate + L-methionine + 3 H(+). Its pathway is cofactor biosynthesis; thiamine diphosphate biosynthesis. In terms of biological role, catalyzes the synthesis of the hydroxymethylpyrimidine phosphate (HMP-P) moiety of thiamine from aminoimidazole ribotide (AIR) in a radical S-adenosyl-L-methionine (SAM)-dependent reaction. The polypeptide is Phosphomethylpyrimidine synthase (Citrobacter koseri (strain ATCC BAA-895 / CDC 4225-83 / SGSC4696)).